The following is a 261-amino-acid chain: (R)-S-adenosyl-L-methionine hydrolase (261 aa).

D12, D72, and N187 together coordinate adenosine. (R)-S-adenosyl-L-methionine-binding residues include N187, S231, and V239. V239 is a binding site for adenosine.

It belongs to the SAM hydrolase / SAM-dependent halogenase family.

It catalyses the reaction (R)-S-adenosyl-L-methionine + H2O = adenosine + L-methionine + H(+). Activity is inhibited by chloride. In terms of biological role, catalyzes the hydrolysis of S-adenosyl-L-methionine (SAM) into adenosine and L-methionine. Is likely stereoselective, specifically hydrolyzing (R)-S-adenosyl-L-methionine ((R)-SAM), the inactive form of the ubiquitous cofactor SAM, and not the active form of SAM, (S)-S-adenosyl-L-methionine. Probaly plays a role in preventing accumulation of (R)-S-adenosyl-L-methionine in cells; maintenance of (S)-S-denosyl-L-methionine homochirality is important for cellular health given that the (R)-form is largely inactive as a methyl donor and can function as an inhibitor of methyltransferases. Shows very slow iodinase activity in vitro. In Salinispora arenicola (strain CNS-205), this protein is (R)-S-adenosyl-L-methionine hydrolase.